A 239-amino-acid polypeptide reads, in one-letter code: Ribonuclease PH (239 aa).

Residues Arg86 and 124–126 (GTR) each bind phosphate.

It belongs to the RNase PH family. Homohexameric ring arranged as a trimer of dimers.

It carries out the reaction tRNA(n+1) + phosphate = tRNA(n) + a ribonucleoside 5'-diphosphate. In terms of biological role, phosphorolytic 3'-5' exoribonuclease that plays an important role in tRNA 3'-end maturation. Removes nucleotide residues following the 3'-CCA terminus of tRNAs; can also add nucleotides to the ends of RNA molecules by using nucleoside diphosphates as substrates, but this may not be physiologically important. Probably plays a role in initiation of 16S rRNA degradation (leading to ribosome degradation) during starvation. The sequence is that of Ribonuclease PH from Cupriavidus necator (strain ATCC 17699 / DSM 428 / KCTC 22496 / NCIMB 10442 / H16 / Stanier 337) (Ralstonia eutropha).